The chain runs to 478 residues: Methionine aminopeptidase 2 (478 aa).

The segment at 1 to 122 is disordered; the sequence is MAGVEEVAAS…TDPPSVPICD (122 aa). Alanine 2 carries the N-acetylalanine modification. The segment covering 36–46 has biased composition (basic residues); that stretch reads KKKRRKKKKSK. Position 45 is a phosphoserine (serine 45). The span at 55-79 shows a compositional bias: basic and acidic residues; the sequence is EPDKESGASVDEVARQLERSALEDK. A phosphoserine; alternate mark is found at serine 60 and serine 63. O-linked (GlcNAc) serine; alternate glycans are attached at residues serine 60 and serine 63. A Phosphoserine modification is found at serine 74. Acidic residues predominate over residues 80–92; that stretch reads ERDEDDEDGDGDG. The span at 97 to 109 shows a compositional bias: basic residues; it reads GKKKKKKKKKRGP. Residue histidine 231 participates in substrate binding. The a divalent metal cation site is built by aspartate 251, aspartate 262, and histidine 331. Histidine 339 is a binding site for substrate. Residues glutamate 364 and glutamate 459 each contribute to the a divalent metal cation site.

This sequence belongs to the peptidase M24A family. Methionine aminopeptidase eukaryotic type 2 subfamily. In terms of assembly, interacts strongly with the eIF-2 gamma-subunit EIF2S3. Binds EIF2S1 at low magnesium concentrations. Co(2+) serves as cofactor. Zn(2+) is required as a cofactor. Requires Mn(2+) as cofactor. It depends on Fe(2+) as a cofactor. Post-translationally, contains approximately 12 O-linked N-acetylglucosamine (GlcNAc) residues. O-glycosylation is required for EIF2S1 binding.

The protein resides in the cytoplasm. It catalyses the reaction Release of N-terminal amino acids, preferentially methionine, from peptides and arylamides.. In terms of biological role, cotranslationally removes the N-terminal methionine from nascent proteins. The N-terminal methionine is often cleaved when the second residue in the primary sequence is small and uncharged (Met-Ala-, Cys, Gly, Pro, Ser, Thr, or Val). The catalytic activity of human METAP2 toward Met-Val peptides is consistently two orders of magnitude higher than that of METAP1, suggesting that it is responsible for processing proteins containing N-terminal Met-Val and Met-Thr sequences in vivo. Functionally, protects eukaryotic initiation factor EIF2S1 from translation-inhibiting phosphorylation by inhibitory kinases such as EIF2AK2/PKR and EIF2AK1/HCR. Plays a critical role in the regulation of protein synthesis. This is Methionine aminopeptidase 2 from Homo sapiens (Human).